The primary structure comprises 61 residues: Insect toxin BsIT1 (61 aa).

One can recognise an LCN-type CS-alpha/beta domain in the interval 1 to 61; it reads DGYILMRNGC…KHLNYHKKTC (61 aa). 4 disulfide bridges follow: Cys10–Cys61, Cys14–Cys35, Cys21–Cys42, and Cys25–Cys44.

The protein belongs to the long (4 C-C) scorpion toxin superfamily. Sodium channel inhibitor family. Beta subfamily. As to expression, expressed by the venom gland.

Its subcellular location is the secreted. Its function is as follows. Depressant insect beta-toxins cause a transient contraction paralysis followed by a slow flaccid paralysis. They bind voltage-independently at site-4 of sodium channels (Nav) and shift the voltage of activation toward more negative potentials thereby affecting sodium channel activation and promoting spontaneous and repetitive firing. This toxin is active only on insects and causes a transient contraction paralysis followed by a slow flaccid paralysis. The chain is Insect toxin BsIT1 from Hottentotta tamulus sindicus (Scorpion).